We begin with the raw amino-acid sequence, 1197 residues long: DExH-box ATP-dependent RNA helicase DExH3 (1197 aa).

The 168-residue stretch at 309–476 folds into the Helicase ATP-binding domain; it reads LKAIAANQVV…FGGAPAMHIP (168 aa). 322–329 provides a ligand contact to ATP; that stretch reads GETGCGKT. The short motif at 423 to 426 is the DEIH box element; sequence DEIH. Positions 564-738 constitute a Helicase C-terminal domain; that stretch reads LIENVLCHIV…SLCLQIKSLG (175 aa).

The protein belongs to the DExH box helicase family.

It carries out the reaction ATP + H2O = ADP + phosphate + H(+). The protein is DExH-box ATP-dependent RNA helicase DExH3 of Arabidopsis thaliana (Mouse-ear cress).